We begin with the raw amino-acid sequence, 361 residues long: Probable S-adenosylmethionine-dependent methyltransferase At5g38780 (361 aa).

Tyr-19, Cys-64, Asn-69, Asp-106, Leu-107, Ser-135, and Phe-136 together coordinate S-adenosyl-L-homocysteine. Mg(2+) is bound by residues Asn-174, Glu-260, Phe-262, and Asn-263.

Belongs to the methyltransferase superfamily. Type-7 methyltransferase family. In terms of assembly, homodimer. Mg(2+) is required as a cofactor.

This is Probable S-adenosylmethionine-dependent methyltransferase At5g38780 from Arabidopsis thaliana (Mouse-ear cress).